Here is a 140-residue protein sequence, read N- to C-terminus: Large ribosomal subunit protein uL16 (140 aa).

Residues 1–14 show a composition bias toward basic residues; the sequence is MLSPRRTKFRKQQR. Positions 1 to 22 are disordered; the sequence is MLSPRRTKFRKQQRGRMEGAAT.

This sequence belongs to the universal ribosomal protein uL16 family. As to quaternary structure, part of the 50S ribosomal subunit.

Functionally, binds 23S rRNA and is also seen to make contacts with the A and possibly P site tRNAs. In Cyanothece sp. (strain PCC 7425 / ATCC 29141), this protein is Large ribosomal subunit protein uL16.